The sequence spans 251 residues: Adenosylcobinamide-GDP ribazoletransferase (251 aa).

The next 6 membrane-spanning stretches (helical) occupy residues 36–56, 60–80, 110–130, 181–201, 202–222, and 231–251; these read LYPF…FVLS, VPIM…TGFL, VGAF…AGIF, EIIL…TLGI, NYLI…LKVK, and DVAG…LGII.

This sequence belongs to the CobS family. Mg(2+) is required as a cofactor.

It is found in the cell membrane. The catalysed reaction is alpha-ribazole + adenosylcob(III)inamide-GDP = adenosylcob(III)alamin + GMP + H(+). It catalyses the reaction alpha-ribazole 5'-phosphate + adenosylcob(III)inamide-GDP = adenosylcob(III)alamin 5'-phosphate + GMP + H(+). Its pathway is cofactor biosynthesis; adenosylcobalamin biosynthesis; adenosylcobalamin from cob(II)yrinate a,c-diamide: step 7/7. Joins adenosylcobinamide-GDP and alpha-ribazole to generate adenosylcobalamin (Ado-cobalamin). Also synthesizes adenosylcobalamin 5'-phosphate from adenosylcobinamide-GDP and alpha-ribazole 5'-phosphate. This chain is Adenosylcobinamide-GDP ribazoletransferase, found in Clostridium perfringens (strain SM101 / Type A).